We begin with the raw amino-acid sequence, 288 residues long: MAGAKEIRNKIGSVKSTQKITKAMEMVAASKMRRSQDAMEASRPYAETMRKVIGHVANANLEYRHPYLEEREAKRVGYIIVSTDRGLCGGLNINVFKKAVTDIQTWKEKGAEIELAVIGSKATAFFKHGGAKVAAQVSGLGDSPSLEDLIGSVGVMLKKYDEGELDRLYVVFNKFVNTMVQQPTIDQLLPLPKSDSKEMQREHSWDYIYEPEPKPLLDTLLVRYVESQVYQGVVENLACEQAARMIAMKAATDNATNLIEDLELVYNKARQAAITQELSEIVGGASAV.

It belongs to the ATPase gamma chain family. In terms of assembly, F-type ATPases have 2 components, CF(1) - the catalytic core - and CF(0) - the membrane proton channel. CF(1) has five subunits: alpha(3), beta(3), gamma(1), delta(1), epsilon(1). CF(0) has three main subunits: a, b and c.

The protein localises to the cell inner membrane. Its function is as follows. Produces ATP from ADP in the presence of a proton gradient across the membrane. The gamma chain is believed to be important in regulating ATPase activity and the flow of protons through the CF(0) complex. This chain is ATP synthase gamma chain, found in Vibrio parahaemolyticus serotype O3:K6 (strain RIMD 2210633).